Consider the following 609-residue polypeptide: Replication factor A protein 1 (609 aa).

The segment covering 130-152 (QNEQNNASAPRTGISTSTNSFYG) has biased composition (polar residues). The tract at residues 130–166 (QNEQNNASAPRTGISTSTNSFYGNNAAATAPAPPPMM) is disordered. A DNA-binding region (OB) is located at residues 192–278 (WTIRARVTNK…NEYELMFERD (87 aa)). The segment at 477-498 (CPAADCNKKVFDQGGSWRCEKC) adopts a C4-type zinc-finger fold.

This sequence belongs to the replication factor A protein 1 family. Component of the heterotrimeric canonical replication protein A complex (RPA).

It is found in the nucleus. Its function is as follows. As part of the replication protein A (RPA/RP-A), a single-stranded DNA-binding heterotrimeric complex, may play an essential role in DNA replication, recombination and repair. Binds and stabilizes single-stranded DNA intermediates, preventing complementary DNA reannealing and recruiting different proteins involved in DNA metabolism. This is Replication factor A protein 1 (ssb1) from Schizosaccharomyces pombe (strain 972 / ATCC 24843) (Fission yeast).